We begin with the raw amino-acid sequence, 402 residues long: Phosphoglycerate kinase (402 aa).

Substrate is bound by residues 24–26 (DFN), R40, 63–66 (HFGR), R122, and R155. ATP contacts are provided by residues K206, G297, E328, and 357-360 (GGDS).

The protein belongs to the phosphoglycerate kinase family. In terms of assembly, monomer.

The protein localises to the cytoplasm. It carries out the reaction (2R)-3-phosphoglycerate + ATP = (2R)-3-phospho-glyceroyl phosphate + ADP. Its pathway is carbohydrate degradation; glycolysis; pyruvate from D-glyceraldehyde 3-phosphate: step 2/5. In Synechococcus sp. (strain CC9311), this protein is Phosphoglycerate kinase.